The sequence spans 118 residues: UPF0102 protein Francci3_3586 (118 aa).

It belongs to the UPF0102 family.

This is UPF0102 protein Francci3_3586 from Frankia casuarinae (strain DSM 45818 / CECT 9043 / HFP020203 / CcI3).